The sequence spans 248 residues: Probable transcriptional regulatory protein Fphi_1565 (248 aa).

This sequence belongs to the TACO1 family.

Its subcellular location is the cytoplasm. This chain is Probable transcriptional regulatory protein Fphi_1565, found in Francisella philomiragia subsp. philomiragia (strain ATCC 25017 / CCUG 19701 / FSC 153 / O#319-036).